The following is a 325-amino-acid chain: Tyrosine phosphatase H2 (325 aa).

The Tyrosine-protein phosphatase domain occupies 27 to 295 (VTREHEKIMA…FFCYRVMERY (269 aa)). Cys-236 functions as the Phosphocysteine intermediate in the catalytic mechanism.

This sequence belongs to the protein-tyrosine phosphatase family.

It localises to the host cytoplasm. It carries out the reaction O-phospho-L-tyrosyl-[protein] + H2O = L-tyrosyl-[protein] + phosphate. In terms of biological role, suppresses host immune cell adhesion and phagocytosis. Triggers host mitochondrial membrane depolarization and caspase-dependent apoptosis. The protein is Tyrosine phosphatase H2 (H2) of Microplitis demolitor bracovirus (isolate Webb) (MdBV).